The chain runs to 258 residues: Aquaglyceroporin (258 aa).

The Cytoplasmic portion of the chain corresponds to 1–16 (MKVTFGNEYIKNFLGE). A helical transmembrane segment spans residues 17–37 (FIGTFVLMFLGEGTTANHFAV). Over 38–45 (PIKNDWLR) the chain is Extracellular. A helical membrane pass occupies residues 46-66 (LCIGWGLGVFFGILISAKLSG). Residues alanine 67 and asparagine 70 each contribute to the glycerol site. Residues 67 to 87 (AHLNLAVTVGLSTIKKFNYKQ) lie on the Cytoplasmic side of the membrane. Residues 88 to 108 (IPLYFAGQLLGALSATASVYG) traverse the membrane as a helical segment. Over 109-133 (LYYGFVSDQTIPKFSWETGKHANVH) the chain is Extracellular. Residues 134–154 (IASAFMHEFILTGILLLIILS) form a helical membrane-spanning segment. The Cytoplasmic portion of the chain corresponds to 155-171 (VTDENICGKFHVLKVSS). Residues 172–192 (IVGLAIICIGISFGGNTGFAL) form a helical membrane-spanning segment. Residues glycine 189, phenylalanine 190, asparagine 193, and arginine 196 each coordinate glycerol. The Extracellular portion of the chain corresponds to 193 to 217 (NPSRDLGARILSAIAYGFEAFTRDK). The helical transmembrane segment at 218-238 (CYFWIPLIAPIIGSIIFCQIY) threads the bilayer. Over 239 to 258 (DKIVAPLVVISEHDKGALEI) the chain is Cytoplasmic.

Belongs to the MIP/aquaporin (TC 1.A.8) family.

Its subcellular location is the cell membrane. The enzyme catalyses H2O(in) = H2O(out). The catalysed reaction is glycerol(in) = glycerol(out). It carries out the reaction urea(in) = urea(out). Mediates water and glycerol transport across the cell membrane. Permeable to urea. Required for efficient progression of parasites through the liver stages. This Plasmodium berghei (strain Anka) protein is Aquaglyceroporin.